The sequence spans 338 residues: MSNWSHKHILDLSSFSIEDYQTVVELANRFKTIPRSGSRKLPALQGRLIATLFFEPSTRTRSSFELAAKRLSADVQSFAPSNSSLIKGETPLDTVMTYVAMGAHVLVVRHGGTGVPEQLAKSLDQKKKNVSILNGGDGLHSHPSQGLLDLFTLTQFFNKESPSPRNIAGKRIAIVGDILHSRVARSNLWSLTACGANVVLCGPPSLLPDDFAKFVEAPPSGQKKDPIKNRGKVTISRCLKEALTDTDAVITLRLQKERMSENLLSNLDKYHNEYGITHESLKWCGKHVPVLHPGPVNRGIEMSSELLEDNSISLIENQVSNGIPIRMALLYLLSADKN.

Residues arginine 59 and threonine 60 each contribute to the carbamoyl phosphate site. An L-aspartate-binding site is contributed by lysine 87. Carbamoyl phosphate-binding residues include arginine 109, histidine 142, and glutamine 145. The L-aspartate site is built by arginine 182 and arginine 253. Residues glycine 294 and proline 295 each coordinate carbamoyl phosphate.

It belongs to the aspartate/ornithine carbamoyltransferase superfamily. ATCase family. Heterododecamer (2C3:3R2) of six catalytic PyrB chains organized as two trimers (C3), and six regulatory PyrI chains organized as three dimers (R2).

It carries out the reaction carbamoyl phosphate + L-aspartate = N-carbamoyl-L-aspartate + phosphate + H(+). It functions in the pathway pyrimidine metabolism; UMP biosynthesis via de novo pathway; (S)-dihydroorotate from bicarbonate: step 2/3. Catalyzes the condensation of carbamoyl phosphate and aspartate to form carbamoyl aspartate and inorganic phosphate, the committed step in the de novo pyrimidine nucleotide biosynthesis pathway. The chain is Aspartate carbamoyltransferase catalytic subunit from Prochlorococcus marinus (strain SARG / CCMP1375 / SS120).